A 186-amino-acid chain; its full sequence is uncharacterized protein (186 aa).

This is an uncharacterized protein from Methanocaldococcus jannaschii (strain ATCC 43067 / DSM 2661 / JAL-1 / JCM 10045 / NBRC 100440) (Methanococcus jannaschii).